A 122-amino-acid polypeptide reads, in one-letter code: Neutral phospholipase A2 agkistrodotoxin (122 aa).

7 cysteine pairs are disulfide-bonded: Cys26/Cys115, Cys28/Cys44, Cys43/Cys95, Cys49/Cys122, Cys50/Cys88, Cys57/Cys81, and Cys75/Cys86. 3 residues coordinate Ca(2+): Tyr27, Gly29, and Gly31. The active site involves His47. Asp48 is a binding site for Ca(2+). Residue Asp89 is part of the active site.

The cofactor is Ca(2+). As to expression, expressed by the venom gland.

The protein localises to the secreted. The catalysed reaction is a 1,2-diacyl-sn-glycero-3-phosphocholine + H2O = a 1-acyl-sn-glycero-3-phosphocholine + a fatty acid + H(+). Its function is as follows. Snake venom phospholipase A2 (PLA2) that inhibits neuromuscular transmission by blocking acetylcholine release from the nerve termini. PLA2 catalyzes the calcium-dependent hydrolysis of the 2-acyl groups in 3-sn-phosphoglycerides. This chain is Neutral phospholipase A2 agkistrodotoxin, found in Gloydius halys (Chinese water mocassin).